A 90-amino-acid polypeptide reads, in one-letter code: Elongation factor 1-beta (90 aa).

It belongs to the EF-1-beta/EF-1-delta family.

Promotes the exchange of GDP for GTP in EF-1-alpha/GDP, thus allowing the regeneration of EF-1-alpha/GTP that could then be used to form the ternary complex EF-1-alpha/GTP/AAtRNA. The protein is Elongation factor 1-beta (ef1b) of Aeropyrum pernix (strain ATCC 700893 / DSM 11879 / JCM 9820 / NBRC 100138 / K1).